A 122-amino-acid chain; its full sequence is Large ribosomal subunit protein uL14 (122 aa).

Belongs to the universal ribosomal protein uL14 family. As to quaternary structure, part of the 50S ribosomal subunit. Forms a cluster with proteins L3 and L19. In the 70S ribosome, L14 and L19 interact and together make contacts with the 16S rRNA in bridges B5 and B8.

In terms of biological role, binds to 23S rRNA. Forms part of two intersubunit bridges in the 70S ribosome. In Halalkalibacterium halodurans (strain ATCC BAA-125 / DSM 18197 / FERM 7344 / JCM 9153 / C-125) (Bacillus halodurans), this protein is Large ribosomal subunit protein uL14.